The chain runs to 106 residues: Large ribosomal subunit protein uL24 (106 aa).

Over residues 84–97 the composition is skewed to basic and acidic residues; sequence EKIGRELGAKEKAR. The disordered stretch occupies residues 84 to 106; the sequence is EKIGRELGAKEKARLQKRKAAAK.

The protein belongs to the universal ribosomal protein uL24 family. As to quaternary structure, part of the 50S ribosomal subunit.

One of two assembly initiator proteins, it binds directly to the 5'-end of the 23S rRNA, where it nucleates assembly of the 50S subunit. Its function is as follows. One of the proteins that surrounds the polypeptide exit tunnel on the outside of the subunit. The chain is Large ribosomal subunit protein uL24 from Anaeromyxobacter sp. (strain K).